The chain runs to 305 residues: D-alanine--D-alanine ligase (305 aa).

The 202-residue stretch at 99–300 folds into the ATP-grasp domain; sequence KLFFEKAGIR…YEEMIQTFVN (202 aa). 126-181 contacts ATP; the sequence is NFTGTYPVVVKPNQEGSTIGLTVAETEEELLQGIEEAFRHDDTILIEEFIAGTEVT.

This sequence belongs to the D-alanine--D-alanine ligase family.

The protein resides in the cytoplasm. It catalyses the reaction 2 D-alanine + ATP = D-alanyl-D-alanine + ADP + phosphate + H(+). It participates in cell wall biogenesis; peptidoglycan biosynthesis. Its function is as follows. Cell wall formation. The chain is D-alanine--D-alanine ligase from Halalkalibacterium halodurans (strain ATCC BAA-125 / DSM 18197 / FERM 7344 / JCM 9153 / C-125) (Bacillus halodurans).